Consider the following 505-residue polypeptide: Glucose-6-phosphate 1-dehydrogenase (505 aa).

Position 2 is an N-acetylserine (serine 2). NADP(+) is bound by residues 18 to 25 and arginine 52; that span reads GASGDLAK. The residue at position 142 (serine 142) is a Phosphoserine. Tyrosine 145 is subject to Phosphotyrosine. Residue lysine 157 coordinates NADP(+). Residues lysine 157, 187-191, glutamate 225, and aspartate 244 each bind D-glucose 6-phosphate; that span reads HYLGK. Histidine 249 (proton acceptor) is an active-site residue. Arginine 340 is an NADP(+) binding site. Lysine 343 is a D-glucose 6-phosphate binding site. NADP(+)-binding residues include lysine 349, arginine 353, and arginine 375. Glutamine 377 contacts D-glucose 6-phosphate. NADP(+) is bound by residues 383–385 and arginine 470; that span reads YLK.

The protein belongs to the glucose-6-phosphate dehydrogenase family.

The enzyme catalyses D-glucose 6-phosphate + NADP(+) = 6-phospho-D-glucono-1,5-lactone + NADPH + H(+). It functions in the pathway carbohydrate degradation; pentose phosphate pathway; D-ribulose 5-phosphate from D-glucose 6-phosphate (oxidative stage): step 1/3. Its function is as follows. Catalyzes the rate-limiting step of the oxidative pentose-phosphate pathway, which represents a route for the dissimilation of carbohydrates besides glycolysis. The main function of this enzyme is to provide reducing power (NADPH) and pentose phosphates for fatty acid and nucleic acid synthesis. The polypeptide is Glucose-6-phosphate 1-dehydrogenase (ZWF1) (Saccharomyces cerevisiae (strain ATCC 204508 / S288c) (Baker's yeast)).